Consider the following 303-residue polypeptide: tRNA pseudouridine synthase B (303 aa).

Catalysis depends on Asp47, which acts as the Nucleophile.

It belongs to the pseudouridine synthase TruB family. Type 1 subfamily.

The enzyme catalyses uridine(55) in tRNA = pseudouridine(55) in tRNA. Functionally, responsible for synthesis of pseudouridine from uracil-55 in the psi GC loop of transfer RNAs. The chain is tRNA pseudouridine synthase B from Roseobacter denitrificans (strain ATCC 33942 / OCh 114) (Erythrobacter sp. (strain OCh 114)).